The sequence spans 184 residues: Photosystem I assembly protein Ycf4 (184 aa).

A run of 2 helical transmembrane segments spans residues 22-42 and 57-77; these read FCWA…GTSS and IIFF…LFIS.

This sequence belongs to the Ycf4 family.

It localises to the plastid. Its subcellular location is the chloroplast thylakoid membrane. Its function is as follows. Seems to be required for the assembly of the photosystem I complex. In Platanus occidentalis (Sycamore), this protein is Photosystem I assembly protein Ycf4.